The primary structure comprises 32 residues: Ranatuerin-2BYa (32 aa).

Cysteine 27 and cysteine 32 are joined by a disulfide.

In terms of tissue distribution, expressed by the skin glands.

Its subcellular location is the secreted. In terms of biological role, antibacterial activity against Gram-positive bacterium S.aureus and Gram-negative bacterium E.coli. Weak hemolytic activity. The protein is Ranatuerin-2BYa of Rana boylii (Foothill yellow-legged frog).